We begin with the raw amino-acid sequence, 328 residues long: Formimidoylglutamase (328 aa).

6 residues coordinate Mn(2+): His133, Asp159, His161, Asp163, Asp253, and Asp255.

The protein belongs to the arginase family. The cofactor is Mn(2+).

It catalyses the reaction N-formimidoyl-L-glutamate + H2O = formamide + L-glutamate. The protein operates within amino-acid degradation; L-histidine degradation into L-glutamate; L-glutamate from N-formimidoyl-L-glutamate (hydrolase route): step 1/1. Its function is as follows. Catalyzes the conversion of N-formimidoyl-L-glutamate to L-glutamate and formamide. The protein is Formimidoylglutamase of Streptococcus pyogenes serotype M6 (strain ATCC BAA-946 / MGAS10394).